We begin with the raw amino-acid sequence, 279 residues long: Nitrogenase vanadium-iron protein alpha chain (279 aa).

[8Fe-7S] cluster is bound by residues cysteine 5, cysteine 31, and cysteine 94. Cysteine 213 provides a ligand contact to [7Fe-V-9S-C-homocitryl] cluster.

This sequence belongs to the NifD/NifK/NifE/NifN family. As to quaternary structure, hexamer of two alpha, two beta, and two delta chains. [8Fe-7S] cluster serves as cofactor. Requires [7Fe-V-9S-C-homocitryl] cluster as cofactor.

It catalyses the reaction N2 + 8 reduced [2Fe-2S]-[ferredoxin] + 16 ATP + 16 H2O = H2 + 8 oxidized [2Fe-2S]-[ferredoxin] + 2 NH4(+) + 16 ADP + 16 phosphate + 6 H(+). In terms of biological role, this vanadium-iron protein is part of the nitrogenase complex that catalyzes the key enzymatic reactions in nitrogen fixation. This Azotobacter salinestris protein is Nitrogenase vanadium-iron protein alpha chain (vnfD).